A 165-amino-acid chain; its full sequence is UPF0254 protein MMP0935 (165 aa).

This sequence belongs to the UPF0254 family.

This chain is UPF0254 protein MMP0935, found in Methanococcus maripaludis (strain DSM 14266 / JCM 13030 / NBRC 101832 / S2 / LL).